The primary structure comprises 108 residues: uncharacterized protein (108 aa).

Helical transmembrane passes span 32–52 (YFFFLLFCKLLNAAEAPLLAI) and 68–88 (SYLLLLITMLEGAEYFSLVVG).

It localises to the membrane. This is an uncharacterized protein from Saccharomyces cerevisiae (strain ATCC 204508 / S288c) (Baker's yeast).